A 178-amino-acid polypeptide reads, in one-letter code: MSGGKYVDSEGHLYTVPIREQGNIYKPNNKAMADELSEKQVYDAHTKEIDLVNRDPKHLNDDVVKIDFEDVIAEPEGTHSFDGIWKASFTTFTVTKYWFYRLLSALFGIPMALIWGIYFAILSFLHIWAVVPCIKSFLIEIQCISRVYSIYIHTVCDPLFEAIGKIFSNVRIGLQKEI.

S2 is subject to N-acetylserine. At S2 the chain carries Phosphoserine. The required for homooligomerization stretch occupies residues 2-94; the sequence is SGGKYVDSEG…WKASFTTFTV (93 aa). The Cytoplasmic segment spans residues 2 to 104; that stretch reads SGGKYVDSEG…TKYWFYRLLS (103 aa). The residue at position 5 (K5) is an N6-acetyllysine; alternate. A Glycyl lysine isopeptide (Lys-Gly) (interchain with G-Cter in ubiquitin); alternate cross-link involves residue K5. Y6 bears the Phosphotyrosine mark. The residue at position 9 (S9) is a Phosphoserine. A Phosphotyrosine; by ABL1 modification is found at Y14. Y25 is modified (phosphotyrosine). Residues K26 and K30 each participate in a glycyl lysine isopeptide (Lys-Gly) (interchain with G-Cter in ubiquitin) cross-link. S37 is subject to Phosphoserine. Residues K39, K47, and K57 each participate in a glycyl lysine isopeptide (Lys-Gly) (interchain with G-Cter in ubiquitin) cross-link. An interaction with CAVIN3 region spans residues 82-94; sequence DGIWKASFTTFTV. The segment at residues 105-125 is an intramembrane region (helical); that stretch reads ALFGIPMALIWGIYFAILSFL. Topologically, residues 126–178 are cytoplasmic; that stretch reads HIWAVVPCIKSFLIEIQCISRVYSIYIHTVCDPLFEAIGKIFSNVRIGLQKEI. Residues 131-142 form an interacts with SPRY1, SPRY2, SPRY3 and SPRY4 region; sequence VPCIKSFLIEIQ. Residues C133, C143, and C156 are each lipidated (S-palmitoyl cysteine). Residues 149–160 are interacts with SPRY1, SPRY2, and SPRY4; that stretch reads SIYIHTVCDPLF. Positions 167-178 are interacts with SPRY1, SPRY2, SPRY3 and SPRY4; the sequence is FSNVRIGLQKEI.

Belongs to the caveolin family. In terms of assembly, homooligomer. Interacts with GLIPR2. Interacts with NOSTRIN. Interacts with SNAP25 and STX1A. Interacts (via the N-terminus) with DPP4; the interaction is direct. Interacts with CTNNB1, CDH1 and JUP. Interacts with PACSIN2; this interaction induces membrane tubulation. Interacts with SLC7A9. Interacts with BMX and BTK. Interacts with TGFBR1. Interacts with CAVIN3 (via leucine-zipper domain) in a cholesterol-sensitive manner. Interacts with CAVIN1. Interacts with EHD2 in a cholesterol-dependent manner. Forms a ternary complex with UBXN6 and VCP; mediates CAV1 targeting to lysosomes for degradation. Interacts with ABCG1; this interaction regulates ABCG1-mediated cholesterol efflux. Interacts with NEU3; this interaction enhances NEU3 sialidase activity within caveola. Interacts (via C-terminus) with SPRY1, SPRY2 (via C-terminus), SPRY3, and SPRY4. Interacts with IGFBP5; this interaction allows trafficking of IGFBP5 from the plasma membrane to the nucleus. In terms of processing, phosphorylated at Tyr-14 by ABL1 in response to oxidative stress. Ubiquitinated. Undergo monoubiquitination and multi- and/or polyubiquitination. Monoubiquitination of N-terminal lysines promotes integration in a ternary complex with UBXN6 and VCP which promotes oligomeric CAV1 targeting to lysosomes for degradation. Ubiquitinated by ZNRF1; leading to degradation and modulation of the TLR4-mediated immune response.

The protein resides in the golgi apparatus membrane. Its subcellular location is the cell membrane. The protein localises to the membrane. It localises to the caveola. It is found in the membrane raft. Functionally, may act as a scaffolding protein within caveolar membranes. Forms a stable heterooligomeric complex with CAV2 that targets to lipid rafts and drives caveolae formation. Mediates the recruitment of CAVIN proteins (CAVIN1/2/3/4) to the caveolae. Interacts directly with G-protein alpha subunits and can functionally regulate their activity. Involved in the costimulatory signal essential for T-cell receptor (TCR)-mediated T-cell activation. Its binding to DPP4 induces T-cell proliferation and NF-kappa-B activation in a T-cell receptor/CD3-dependent manner. Recruits CTNNB1 to caveolar membranes and may regulate CTNNB1-mediated signaling through the Wnt pathway. Negatively regulates TGFB1-mediated activation of SMAD2/3 by mediating the internalization of TGFBR1 from membrane rafts leading to its subsequent degradation. Binds 20(S)-hydroxycholesterol (20(S)-OHC). The sequence is that of Caveolin-1 (CAV1) from Saimiri boliviensis boliviensis (Bolivian squirrel monkey).